Here is a 279-residue protein sequence, read N- to C-terminus: 4-hydroxy-3-methylbut-2-enyl diphosphate reductase (279 aa).

Residue Cys-12 participates in [4Fe-4S] cluster binding. 2 residues coordinate (2E)-4-hydroxy-3-methylbut-2-enyl diphosphate: His-41 and His-74. Dimethylallyl diphosphate contacts are provided by His-41 and His-74. The isopentenyl diphosphate site is built by His-41 and His-74. [4Fe-4S] cluster is bound at residue Cys-96. His-124 contributes to the (2E)-4-hydroxy-3-methylbut-2-enyl diphosphate binding site. Position 124 (His-124) interacts with dimethylallyl diphosphate. His-124 is a binding site for isopentenyl diphosphate. The Proton donor role is filled by Glu-126. Position 164 (Thr-164) interacts with (2E)-4-hydroxy-3-methylbut-2-enyl diphosphate. Cys-192 contacts [4Fe-4S] cluster. The (2E)-4-hydroxy-3-methylbut-2-enyl diphosphate site is built by Ser-220, Ser-221, Asn-222, and Ser-263. The dimethylallyl diphosphate site is built by Ser-220, Ser-221, Asn-222, and Ser-263. 4 residues coordinate isopentenyl diphosphate: Ser-220, Ser-221, Asn-222, and Ser-263.

Belongs to the IspH family. [4Fe-4S] cluster is required as a cofactor.

It catalyses the reaction isopentenyl diphosphate + 2 oxidized [2Fe-2S]-[ferredoxin] + H2O = (2E)-4-hydroxy-3-methylbut-2-enyl diphosphate + 2 reduced [2Fe-2S]-[ferredoxin] + 2 H(+). The enzyme catalyses dimethylallyl diphosphate + 2 oxidized [2Fe-2S]-[ferredoxin] + H2O = (2E)-4-hydroxy-3-methylbut-2-enyl diphosphate + 2 reduced [2Fe-2S]-[ferredoxin] + 2 H(+). It participates in isoprenoid biosynthesis; dimethylallyl diphosphate biosynthesis; dimethylallyl diphosphate from (2E)-4-hydroxy-3-methylbutenyl diphosphate: step 1/1. The protein operates within isoprenoid biosynthesis; isopentenyl diphosphate biosynthesis via DXP pathway; isopentenyl diphosphate from 1-deoxy-D-xylulose 5-phosphate: step 6/6. Functionally, catalyzes the conversion of 1-hydroxy-2-methyl-2-(E)-butenyl 4-diphosphate (HMBPP) into a mixture of isopentenyl diphosphate (IPP) and dimethylallyl diphosphate (DMAPP). Acts in the terminal step of the DOXP/MEP pathway for isoprenoid precursor biosynthesis. This is 4-hydroxy-3-methylbut-2-enyl diphosphate reductase from Clostridioides difficile (strain 630) (Peptoclostridium difficile).